We begin with the raw amino-acid sequence, 329 residues long: Glycerol-3-phosphate dehydrogenase [NAD(P)+] (329 aa).

Positions 13, 14, 34, and 105 each coordinate NADPH. 3 residues coordinate sn-glycerol 3-phosphate: Lys-105, Gly-134, and Ser-136. Residue Ala-138 participates in NADPH binding. Sn-glycerol 3-phosphate contacts are provided by Lys-189, Asp-242, Ser-252, Arg-253, and Asn-254. Lys-189 (proton acceptor) is an active-site residue. Residue Arg-253 coordinates NADPH. Residues Val-277 and Glu-279 each coordinate NADPH.

It belongs to the NAD-dependent glycerol-3-phosphate dehydrogenase family.

The protein localises to the cytoplasm. It catalyses the reaction sn-glycerol 3-phosphate + NAD(+) = dihydroxyacetone phosphate + NADH + H(+). It carries out the reaction sn-glycerol 3-phosphate + NADP(+) = dihydroxyacetone phosphate + NADPH + H(+). It participates in membrane lipid metabolism; glycerophospholipid metabolism. Catalyzes the reduction of the glycolytic intermediate dihydroxyacetone phosphate (DHAP) to sn-glycerol 3-phosphate (G3P), the key precursor for phospholipid synthesis. In Legionella pneumophila (strain Lens), this protein is Glycerol-3-phosphate dehydrogenase [NAD(P)+].